The chain runs to 276 residues: NADPH-dependent 7-cyano-7-deazaguanine reductase (276 aa).

Substrate is bound at residue 83–85; the sequence is IES. NADPH is bound at residue 85–86; it reads SK. Cysteine 184 serves as the catalytic Thioimide intermediate. Aspartate 191 acts as the Proton donor in catalysis. 223 to 224 is a binding site for substrate; sequence HE. An NADPH-binding site is contributed by 252–253; it reads RG.

The protein belongs to the GTP cyclohydrolase I family. QueF type 2 subfamily. In terms of assembly, homodimer.

The protein localises to the cytoplasm. It carries out the reaction 7-aminomethyl-7-carbaguanine + 2 NADP(+) = 7-cyano-7-deazaguanine + 2 NADPH + 3 H(+). Its pathway is tRNA modification; tRNA-queuosine biosynthesis. Its function is as follows. Catalyzes the NADPH-dependent reduction of 7-cyano-7-deazaguanine (preQ0) to 7-aminomethyl-7-deazaguanine (preQ1). The polypeptide is NADPH-dependent 7-cyano-7-deazaguanine reductase (Pseudomonas aeruginosa (strain LESB58)).